We begin with the raw amino-acid sequence, 336 residues long: Iron(3+)-hydroxamate import system permease protein FhuG (336 aa).

Transmembrane regions (helical) follow at residues 9 to 29, 63 to 83, 91 to 111, 124 to 144, 155 to 175, 193 to 213, 245 to 265, 285 to 305, and 313 to 333; these read LIVMAVTFLLIVVVFFISLNL, IILSLLVGAGISVAGAILQSV, PGILGINAGGSLAVVLFIYFF, FMLPFSALAGAILAAFLIYIL, LILVGIGVNAGFNALLLIFQL, IWGANWNMIWAILPWIVILLL, ILLLAAVTLAASCVAAAGGIA, TLIPVSAFIGSFLFLLADTLA, and EIPVGLVISVLGAPYFIYLLM.

It belongs to the binding-protein-dependent transport system permease family. FecCD subfamily. As to quaternary structure, the complex is composed of an ATP-binding protein (FhuC), two transmembrane proteins (FhuB and FhuG) and a solute-binding protein (FhuD or YxeB).

It is found in the cell membrane. In terms of biological role, part of the ABC transporter complex FhuBGCD involved in iron(3+)-hydroxamate import. Responsible for the translocation of the substrate across the membrane. The sequence is that of Iron(3+)-hydroxamate import system permease protein FhuG (fhuG) from Bacillus subtilis (strain 168).